The primary structure comprises 119 residues: Small polypeptide DEVIL 24 (119 aa).

The tract at residues 83-114 (SFTSKCTSLMKQQHARLCIIRLCATMLLRSYT) is required for DVL/RTFL small polypeptide activity. Residues 96–113 (HARLCIIRLCATMLLRSY) traverse the membrane as a helical segment.

The protein belongs to the DVL/RTFL small polypeptides family.

Its subcellular location is the cell membrane. In terms of biological role, small polypeptide acting as a regulatory molecule which coordinates cellular responses required for differentiation, growth and development, probably by restricting polar cell proliferation in lateral organs and coordinating socket cell recruitment and differentiation at trichome sites. The protein is Small polypeptide DEVIL 24 of Arabidopsis thaliana (Mouse-ear cress).